The primary structure comprises 251 residues: Ubiquinone/menaquinone biosynthesis C-methyltransferase UbiE (251 aa).

Residues Thr74, Asp95, 123-124 (NA), and Ser140 contribute to the S-adenosyl-L-methionine site.

It belongs to the class I-like SAM-binding methyltransferase superfamily. MenG/UbiE family.

It catalyses the reaction a 2-demethylmenaquinol + S-adenosyl-L-methionine = a menaquinol + S-adenosyl-L-homocysteine + H(+). The enzyme catalyses a 2-methoxy-6-(all-trans-polyprenyl)benzene-1,4-diol + S-adenosyl-L-methionine = a 5-methoxy-2-methyl-3-(all-trans-polyprenyl)benzene-1,4-diol + S-adenosyl-L-homocysteine + H(+). Its pathway is quinol/quinone metabolism; menaquinone biosynthesis; menaquinol from 1,4-dihydroxy-2-naphthoate: step 2/2. It participates in cofactor biosynthesis; ubiquinone biosynthesis. Its function is as follows. Methyltransferase required for the conversion of demethylmenaquinol (DMKH2) to menaquinol (MKH2) and the conversion of 2-polyprenyl-6-methoxy-1,4-benzoquinol (DDMQH2) to 2-polyprenyl-3-methyl-6-methoxy-1,4-benzoquinol (DMQH2). In Serratia proteamaculans (strain 568), this protein is Ubiquinone/menaquinone biosynthesis C-methyltransferase UbiE.